Consider the following 457-residue polypeptide: Probable ATP-dependent RNA helicase DDX47 (457 aa).

Position 2 is an N-acetylalanine (Ala2). Ser9 bears the Phosphoserine mark. Residues 26–54 (KTFKDLGVTDVLCEACDQLGWTKPTKIQI) carry the Q motif motif. Positions 57–228 (IPLALQGRDI…RAALKNPVKC (172 aa)) constitute a Helicase ATP-binding domain. 70 to 77 (AETGSGKT) contacts ATP. Thr151 carries the phosphothreonine modification. The short motif at 176–179 (DEAD) is the DEAD box element. In terms of domain architecture, Helicase C-terminal spans 239–399 (KLQQYYLFIP…VFPTQDDEVM (161 aa)). Residues 415–430 (ELREHGEKKKRSREDV) show a composition bias toward basic and acidic residues. The tract at residues 415–457 (ELREHGEKKKRSREDVGDNDDTEGAIGVRNKVAGGKMKKRKGR) is disordered. Ser426 is subject to Phosphoserine.

It belongs to the DEAD box helicase family. DDX47/RRP3 subfamily. In terms of assembly, interacts with AGO1 and AGO2. Interacts with GABARAP. Interacts with NOL8; the interaction is RNA-dependent.

The protein resides in the nucleus. It is found in the nucleolus. It catalyses the reaction ATP + H2O = ADP + phosphate + H(+). In terms of biological role, involved in apoptosis. May have a role in rRNA processing and mRNA splicing. Associates with pre-rRNA precursors. The sequence is that of Probable ATP-dependent RNA helicase DDX47 (DDX47) from Bos taurus (Bovine).